Reading from the N-terminus, the 32-residue chain is Tail virion protein G7P (32 aa).

A helical transmembrane segment spans residues 8–28; the sequence is IIYVVFALGLVVSFGLGAITA.

This sequence belongs to the inovirus G7P protein family.

Its subcellular location is the virion. It is found in the host membrane. In terms of biological role, may initiate with G9P the virion concomitant assembly-budding process, by interacting with the packaging signal of the viral genome. The assembly-budding takes place at the host inner membrane. In turn, G7P and G9P are present at the end of the filamentous virion that emerges first from the bacterial host. In Escherichia coli (Bacteriophage IKe), this protein is Tail virion protein G7P (VII).